A 216-amino-acid polypeptide reads, in one-letter code: RNA pyrophosphohydrolase (216 aa).

The Nudix hydrolase domain maps to 6–149; sequence GFRPNVGIIL…KRDVYQLALT (144 aa). The Nudix box signature appears at 38–59; that stretch reads GGIKYGETPMQAMYRELHEETG. The interval 159–180 is disordered; that stretch reads AQRTDKSRGPRAPRYPRVSNGH.

The protein belongs to the Nudix hydrolase family. RppH subfamily. Requires a divalent metal cation as cofactor.

Its function is as follows. Accelerates the degradation of transcripts by removing pyrophosphate from the 5'-end of triphosphorylated RNA, leading to a more labile monophosphorylated state that can stimulate subsequent ribonuclease cleavage. This chain is RNA pyrophosphohydrolase, found in Burkholderia thailandensis (strain ATCC 700388 / DSM 13276 / CCUG 48851 / CIP 106301 / E264).